We begin with the raw amino-acid sequence, 330 residues long: Serine/threonine-protein phosphatase beta isoform (330 aa).

Mn(2+) is bound by residues Asp63, His65, Asp91, and Asn123. His124 functions as the Proton donor in the catalytic mechanism. 2 residues coordinate Mn(2+): His172 and His247. The span at 308 to 319 shows a compositional bias: polar residues; it reads GMNSSRPTTPQR. The interval 308 to 330 is disordered; that stretch reads GMNSSRPTTPQRSAPMLATNKKK. Thr315 and Thr316 each carry phosphothreonine.

Belongs to the PPP phosphatase family. PP-1 subfamily. Interacts with Nop17l. Interacts with uri; uri inhibits flw phosphatase activity. The cofactor is Mn(2+).

It catalyses the reaction O-phospho-L-seryl-[protein] + H2O = L-seryl-[protein] + phosphate. The catalysed reaction is O-phospho-L-threonyl-[protein] + H2O = L-threonyl-[protein] + phosphate. In terms of biological role, required for cell adhesion in non-muscle tissues and in maintenance of muscle attachment. Vital for larval development. This chain is Serine/threonine-protein phosphatase beta isoform (flw), found in Drosophila melanogaster (Fruit fly).